We begin with the raw amino-acid sequence, 351 residues long: Translation initiation factor eIF2B subunit beta (351 aa).

This sequence belongs to the eIF-2B alpha/beta/delta subunits family. In terms of assembly, component of the translation initiation factor 2B (eIF2B) complex which is a heterodecamer of two sets of five different subunits: alpha, beta, gamma, delta and epsilon. Subunits alpha, beta and delta comprise a regulatory subcomplex and subunits epsilon and gamma comprise a catalytic subcomplex. Within the complex, the hexameric regulatory complex resides at the center, with the two heterodimeric catalytic subcomplexes bound on opposite sides.

It is found in the cytoplasm. The protein resides in the cytosol. With respect to regulation, activated by the chemical integrated stress response (ISR) inhibitor ISRIB which stimulates guanine nucleotide exchange factor activity for both phosphorylated and unphosphorylated eIF2. Its function is as follows. Acts as a component of the translation initiation factor 2B (eIF2B) complex, which catalyzes the exchange of GDP for GTP on eukaryotic initiation factor 2 (eIF2) gamma subunit. Its guanine nucleotide exchange factor activity is repressed when bound to eIF2 complex phosphorylated on the alpha subunit, thereby limiting the amount of methionyl-initiator methionine tRNA available to the ribosome and consequently global translation is repressed. The protein is Translation initiation factor eIF2B subunit beta (EIF2B2) of Bos taurus (Bovine).